Reading from the N-terminus, the 272-residue chain is Putative pyruvate, phosphate dikinase regulatory protein (272 aa).

153–160 (GVSRTSKT) contributes to the ADP binding site.

It belongs to the pyruvate, phosphate/water dikinase regulatory protein family. PDRP subfamily.

The catalysed reaction is N(tele)-phospho-L-histidyl/L-threonyl-[pyruvate, phosphate dikinase] + ADP = N(tele)-phospho-L-histidyl/O-phospho-L-threonyl-[pyruvate, phosphate dikinase] + AMP + H(+). It catalyses the reaction N(tele)-phospho-L-histidyl/O-phospho-L-threonyl-[pyruvate, phosphate dikinase] + phosphate + H(+) = N(tele)-phospho-L-histidyl/L-threonyl-[pyruvate, phosphate dikinase] + diphosphate. In terms of biological role, bifunctional serine/threonine kinase and phosphorylase involved in the regulation of the pyruvate, phosphate dikinase (PPDK) by catalyzing its phosphorylation/dephosphorylation. This is Putative pyruvate, phosphate dikinase regulatory protein from Chelativorans sp. (strain BNC1).